The following is a 244-amino-acid chain: Protein HRI1 (244 aa).

The residue at position 143 (S143) is a Phosphoserine.

It belongs to the HRI1 family. As to quaternary structure, interacts with HRR25. May interact with SEC72.

It is found in the cytoplasm. The protein resides in the nucleus. Its function is as follows. Unknown. Non essential. This is Protein HRI1 (HRI1) from Saccharomyces cerevisiae (strain ATCC 204508 / S288c) (Baker's yeast).